We begin with the raw amino-acid sequence, 132 residues long: Small ribosomal subunit protein uS8 (132 aa).

Part of the 30S ribosomal subunit. Contacts proteins S5 and S12. A modified and unmodified form exist; the nature of the modification(s) is unknown.

Its function is as follows. One of the primary rRNA binding proteins, it binds directly to 16S rRNA central domain where it helps coordinate assembly of the platform of the 30S subunit. The chain is Small ribosomal subunit protein uS8 from Rhodopseudomonas palustris (strain ATCC BAA-98 / CGA009).